Here is a 516-residue protein sequence, read N- to C-terminus: Exodeoxyribonuclease 7 large subunit (516 aa).

The protein belongs to the XseA family. In terms of assembly, heterooligomer composed of large and small subunits.

It localises to the cytoplasm. It catalyses the reaction Exonucleolytic cleavage in either 5'- to 3'- or 3'- to 5'-direction to yield nucleoside 5'-phosphates.. Functionally, bidirectionally degrades single-stranded DNA into large acid-insoluble oligonucleotides, which are then degraded further into small acid-soluble oligonucleotides. This is Exodeoxyribonuclease 7 large subunit from Chlamydia trachomatis serovar A (strain ATCC VR-571B / DSM 19440 / HAR-13).